The primary structure comprises 417 residues: Serine hydroxymethyltransferase 1 (417 aa).

(6S)-5,6,7,8-tetrahydrofolate-binding positions include Leu121 and 125–127 (GHL). Lys230 carries the post-translational modification N6-(pyridoxal phosphate)lysine. 355–357 (SPF) contributes to the (6S)-5,6,7,8-tetrahydrofolate binding site.

The protein belongs to the SHMT family. Homodimer. Pyridoxal 5'-phosphate is required as a cofactor.

Its subcellular location is the cytoplasm. The catalysed reaction is (6R)-5,10-methylene-5,6,7,8-tetrahydrofolate + glycine + H2O = (6S)-5,6,7,8-tetrahydrofolate + L-serine. The protein operates within one-carbon metabolism; tetrahydrofolate interconversion. Its pathway is amino-acid biosynthesis; glycine biosynthesis; glycine from L-serine: step 1/1. Its function is as follows. Catalyzes the reversible interconversion of serine and glycine with tetrahydrofolate (THF) serving as the one-carbon carrier. This reaction serves as the major source of one-carbon groups required for the biosynthesis of purines, thymidylate, methionine, and other important biomolecules. Also exhibits THF-independent aldolase activity toward beta-hydroxyamino acids, producing glycine and aldehydes, via a retro-aldol mechanism. The protein is Serine hydroxymethyltransferase 1 of Pseudomonas putida (strain ATCC 47054 / DSM 6125 / CFBP 8728 / NCIMB 11950 / KT2440).